The primary structure comprises 152 residues: Zinc finger SWIM domain-containing protein 7 (152 aa).

The SWIM-type zinc finger occupies 76–114 (YTCLASCHYCSCPAFSFSVLRKSDSLLCKHLLAIYLSQL).

This sequence belongs to the SWS1 family. In terms of assembly, interacts with RAD51D and XRCC3; involved in homologous recombination repair. Interacts with SWSAP1; they form a functional complex involved in homologous recombination repair and stabilize each other.

Its subcellular location is the nucleus. Its function is as follows. Involved in early stages of the homologous recombination repair (HRR) pathway of double-stranded DNA breaks arising during DNA replication or induced by DNA-damaging agents. Required for meiotic progression, hence for fertility. The polypeptide is Zinc finger SWIM domain-containing protein 7 (Zswim7) (Mus musculus (Mouse)).